Here is a 286-residue protein sequence, read N- to C-terminus: 33 kDa chaperonin (286 aa).

Disulfide bonds link Cys-225-Cys-227 and Cys-258-Cys-261.

It belongs to the HSP33 family. In terms of processing, under oxidizing conditions two disulfide bonds are formed involving the reactive cysteines. Under reducing conditions zinc is bound to the reactive cysteines and the protein is inactive.

It is found in the cytoplasm. In terms of biological role, redox regulated molecular chaperone. Protects both thermally unfolding and oxidatively damaged proteins from irreversible aggregation. Plays an important role in the bacterial defense system toward oxidative stress. This Shewanella frigidimarina (strain NCIMB 400) protein is 33 kDa chaperonin.